A 538-amino-acid polypeptide reads, in one-letter code: Bifunctional purine biosynthesis protein PurH (538 aa).

The MGS-like domain occupies 6–158; that stretch reads KHIPAPDLHR…KNHAYVATVV (153 aa).

The protein belongs to the PurH family.

The enzyme catalyses (6R)-10-formyltetrahydrofolate + 5-amino-1-(5-phospho-beta-D-ribosyl)imidazole-4-carboxamide = 5-formamido-1-(5-phospho-D-ribosyl)imidazole-4-carboxamide + (6S)-5,6,7,8-tetrahydrofolate. It carries out the reaction IMP + H2O = 5-formamido-1-(5-phospho-D-ribosyl)imidazole-4-carboxamide. The protein operates within purine metabolism; IMP biosynthesis via de novo pathway; 5-formamido-1-(5-phospho-D-ribosyl)imidazole-4-carboxamide from 5-amino-1-(5-phospho-D-ribosyl)imidazole-4-carboxamide (10-formyl THF route): step 1/1. It participates in purine metabolism; IMP biosynthesis via de novo pathway; IMP from 5-formamido-1-(5-phospho-D-ribosyl)imidazole-4-carboxamide: step 1/1. The protein is Bifunctional purine biosynthesis protein PurH of Brucella abortus (strain S19).